Here is a 231-residue protein sequence, read N- to C-terminus: Very-long-chain (3R)-3-hydroxyacyl-CoA dehydratase 4 (231 aa).

Over 1 to 19 the chain is Cytoplasmic; it reads MGPVALPTWLQPRYRKNAY. A helical membrane pass occupies residues 20-40; sequence LFIYYLIQFCGHSWIFTNMTV. Residues 41 to 56 lie on the Lumenal side of the membrane; it reads RFFSFGKDSMVDTFYA. The helical transmembrane segment at 57 to 77 threads the bilayer; that stretch reads IGLVMQLCQSISLLELLHIYV. At 78-112 the chain is on the cytoplasmic side; that stretch reads GIESNHLLPRILQLTERIIVLFMVITSQEEVQEKY. Residues 113–133 traverse the membrane as a helical segment; it reads VVCVLFIFRNLLDMVRYTYSM. Residues 134-135 are Lumenal-facing; it reads LS. Residues 136-156 traverse the membrane as a helical segment; the sequence is VIGISYAVLTWFSQTLWMPIY. The active site involves tyrosine 156. A topological domain (cytoplasmic) is located at residue proline 157. The chain crosses the membrane as a helical span at residues 158 to 178; it reads LCVLAEAFTIYQSLPYFESFG. The active site involves glutamate 163. Over 179 to 189 the chain is Lumenal; that stretch reads TYSTKLPFDLS. Residues 190–210 traverse the membrane as a helical segment; it reads FYFPYVLKIYLMMLFVGMYFT. Residues 211 to 231 lie on the Cytoplasmic side of the membrane; the sequence is YNHLYSERRDILRVFPNKKKM.

It belongs to the very long-chain fatty acids dehydratase HACD family. May interact with enzymes of the ELO family (including ELOVL1); with those enzymes that mediate condensation, the first of the four steps of the reaction cycle responsible for fatty acids elongation, may be part of a larger fatty acids elongase complex.

Its subcellular location is the endoplasmic reticulum membrane. The enzyme catalyses a very-long-chain (3R)-3-hydroxyacyl-CoA = a very-long-chain (2E)-enoyl-CoA + H2O. The catalysed reaction is (3R)-hydroxyhexadecanoyl-CoA = (2E)-hexadecenoyl-CoA + H2O. The protein operates within lipid metabolism; fatty acid biosynthesis. In terms of biological role, catalyzes the third of the four reactions of the long-chain fatty acids elongation cycle. This endoplasmic reticulum-bound enzymatic process, allows the addition of two carbons to the chain of long- and very long-chain fatty acids/VLCFAs per cycle. This enzyme catalyzes the dehydration of the 3-hydroxyacyl-CoA intermediate into trans-2,3-enoyl-CoA, within each cycle of fatty acid elongation. Thereby, it participates in the production of VLCFAs of different chain lengths that are involved in multiple biological processes as precursors of membrane lipids and lipid mediators. In Bos taurus (Bovine), this protein is Very-long-chain (3R)-3-hydroxyacyl-CoA dehydratase 4.